Consider the following 78-residue polypeptide: Toxin-like protein 10 (78 aa).

Positions 1–23 are cleaved as a signal peptide; the sequence is MKATALLIAVFILFSVFGDMGYC.

In terms of processing, contains 4 disulfide bonds. In terms of tissue distribution, expressed by the venom gland.

The protein resides in the secreted. In Urodacus yaschenkoi (Inland robust scorpion), this protein is Toxin-like protein 10.